The following is a 965-amino-acid chain: Aminopeptidase N (965 aa).

Over 2–8 (AKGFYIS) the chain is Cytoplasmic. Residues 9-32 (KTLGILGILLGVAAVCTIIALSVV) form a helical; Signal-anchor for type II membrane protein membrane-spanning segment. The cytosolic Ser/Thr-rich junction stretch occupies residues 33–68 (YAQEKNRNAENSAIAPTLPGSTSATTSTTNPAIDES). Over 33–965 (YAQEKNRNAE…VVLKWFTENS (933 aa)) the chain is Extracellular. The segment at 44–68 (SAIAPTLPGSTSATTSTTNPAIDES) is disordered. Residues 47–64 (APTLPGSTSATTSTTNPA) show a composition bias toward low complexity. The tract at residues 69–965 (KPWNQYRLPK…VVLKWFTENS (897 aa)) is metalloprotease. N114 and N128 each carry an N-linked (GlcNAc...) asparagine glycan. At Y176 the chain carries Sulfotyrosine. N234, N242, and N264 each carry an N-linked (GlcNAc...) asparagine glycan. 351–355 (GAMEN) contributes to the substrate binding site. Residue H387 participates in Zn(2+) binding. E388 acts as the Proton acceptor in catalysis. 2 residues coordinate Zn(2+): H391 and E410. N-linked (GlcNAc...) asparagine glycans are attached at residues N555, N606, and N624. An intrachain disulfide couples C760 to C767. Residue N780 is glycosylated (N-linked (GlcNAc...) asparagine). A disulfide bridge links C797 with C833. A Phosphotyrosine modification is found at Y852.

Belongs to the peptidase M1 family. Homodimer. Interacts with SLC6A19. It depends on Zn(2+) as a cofactor. Post-translationally, sulfated. In terms of processing, N- and O-glycosylated. May undergo proteolysis and give rise to a soluble form. In terms of tissue distribution, widely distributed throughout the CNS. Particularly abundant in kidney and intestinal microvilli, also detected in lung and liver. Weakly expressed in heart and aorta.

It localises to the cell membrane. It catalyses the reaction Release of an N-terminal amino acid, Xaa-|-Yaa- from a peptide, amide or arylamide. Xaa is preferably Ala, but may be most amino acids including Pro (slow action). When a terminal hydrophobic residue is followed by a prolyl residue, the two may be released as an intact Xaa-Pro dipeptide.. In terms of biological role, broad specificity aminopeptidase which plays a role in the final digestion of peptides generated from hydrolysis of proteins by gastric and pancreatic proteases. Also involved in the processing of various peptides including peptide hormones, such as angiotensin III and IV, neuropeptides, and chemokines. May also be involved the cleavage of peptides bound to major histocompatibility complex class II molecules of antigen presenting cells. May have a role in angiogenesis and promote cholesterol crystallization. May have a role in amino acid transport by acting as binding partner of amino acid transporter SLC6A19 and regulating its activity. The chain is Aminopeptidase N (Anpep) from Rattus norvegicus (Rat).